An 89-amino-acid chain; its full sequence is UPF0250 protein CV_3095 (89 aa).

The protein belongs to the UPF0250 family.

The chain is UPF0250 protein CV_3095 from Chromobacterium violaceum (strain ATCC 12472 / DSM 30191 / JCM 1249 / CCUG 213 / NBRC 12614 / NCIMB 9131 / NCTC 9757 / MK).